The sequence spans 381 residues: rRNA adenine N-6-methyltransferase (381 aa).

The span at 1 to 19 (MSSSDEQPRPRRRNQDRQH) shows a compositional bias: basic and acidic residues. A disordered region spans residues 1–42 (MSSSDEQPRPRRRNQDRQHPNQNRPVLGRTERDRNRRQFGQN). S-adenosyl-L-methionine is bound by residues Asn-42, Leu-44, Gly-69, Glu-90, Asp-115, and Ala-131. Residues 282–381 (RLDQKNEPRG…PGRRGGPGQR (100 aa)) form a disordered region. A compositionally biased stretch (basic and acidic residues) spans 301-358 (GGRDHGDRRTGGQDRGDRRTGGRDHRDRQASGHGDRRSSGRNRDDGRTGEREQGDQGG). Gly residues predominate over residues 359-381 (RRGPSGGGRTGGRPGRRGGPGQR).

This sequence belongs to the class I-like SAM-binding methyltransferase superfamily. rRNA adenine N(6)-methyltransferase family.

The catalysed reaction is adenosine(2085) in 23S rRNA + 2 S-adenosyl-L-methionine = N(6)-dimethyladenosine(2085) in 23S rRNA + 2 S-adenosyl-L-homocysteine + 2 H(+). In terms of biological role, this protein produces a dimethylation of the adenine residue at position 2085 in 23S rRNA, resulting in reduced affinity between ribosomes and macrolide-lincosamide-streptogramin B antibiotics. This is rRNA adenine N-6-methyltransferase (ermE) from Saccharopolyspora erythraea (strain ATCC 11635 / DSM 40517 / JCM 4748 / NBRC 13426 / NCIMB 8594 / NRRL 2338).